The chain runs to 172 residues: Ribosome maturation factor RimM (172 aa).

The region spanning 94–167 (EGSYYYKDII…VAHVIVPEGL (74 aa)) is the PRC barrel domain.

This sequence belongs to the RimM family. Binds ribosomal protein uS19.

It localises to the cytoplasm. Its function is as follows. An accessory protein needed during the final step in the assembly of 30S ribosomal subunit, possibly for assembly of the head region. Essential for efficient processing of 16S rRNA. May be needed both before and after RbfA during the maturation of 16S rRNA. It has affinity for free ribosomal 30S subunits but not for 70S ribosomes. The protein is Ribosome maturation factor RimM of Lacticaseibacillus paracasei (strain ATCC 334 / BCRC 17002 / CCUG 31169 / CIP 107868 / KCTC 3260 / NRRL B-441) (Lactobacillus paracasei).